The primary structure comprises 280 residues: MVFDRLAGIYDATGVEFFRPVARRLLDLVDPRPGVDLLDVGCGRGAVLFPAAERVGPGGTVVGIDIAEPMVRATAAEAAERGLGTVSVRLGDGADPAFPAGSFDVVTASMSAALFPDLPAVAARYARLLRPDGRIGLTGPVPPPSLREWALGPLRVGAVVDAIAPEAVAATHPRIAALLGAHPFGAPGAVADALRAAGFVEVRELHEDLELRAPSAEALVGWTWSNGLRVYWELVEPDRRAAVAAELVRDLTAHAAGGPITATYPVAYVTGRLRPAGGTP.

This sequence belongs to the methyltransferase superfamily.

It carries out the reaction nocamycin E + S-adenosyl-L-methionine = nocamycin I + S-adenosyl-L-homocysteine. It participates in antibiotic biosynthesis. Involved in the biosynthesis of nocamycin I and nocamycin II. Catalyzes the methylation of nocamycin E to yield nocamycin I. This is Nocamycin O-methyltransferase from Saccharothrix syringae (Nocardiopsis syringae).